Reading from the N-terminus, the 213-residue chain is Glycerol-3-phosphate acyltransferase (213 aa).

Helical transmembrane passes span 2-22, 52-74, 81-100, 112-132, 143-163, and 164-184; these read ITIV…GLWI, AGMA…PIIF, PLIF…FAGF, VIFG…FGAL, VTAS…GFIL, and SNYD…IIIR.

It belongs to the PlsY family. In terms of assembly, probably interacts with PlsX.

It is found in the cell membrane. The enzyme catalyses an acyl phosphate + sn-glycerol 3-phosphate = a 1-acyl-sn-glycero-3-phosphate + phosphate. It functions in the pathway lipid metabolism; phospholipid metabolism. Functionally, catalyzes the transfer of an acyl group from acyl-phosphate (acyl-PO(4)) to glycerol-3-phosphate (G3P) to form lysophosphatidic acid (LPA). This enzyme utilizes acyl-phosphate as fatty acyl donor, but not acyl-CoA or acyl-ACP. This is Glycerol-3-phosphate acyltransferase from Streptococcus pneumoniae (strain Hungary19A-6).